We begin with the raw amino-acid sequence, 481 residues long: Phloretin 4'-O-glucosyltransferase (481 aa).

His16 (proton acceptor) is an active-site residue. Residue His16 participates in an anthocyanidin binding. UDP-alpha-D-glucose-binding residues include Gln354, His369, Trp372, Asn373, Ser374, Glu377, Asp393, and Gln394.

It belongs to the UDP-glycosyltransferase family. In terms of tissue distribution, highly expressed in young leaves, at intermediate level in mature leaves and at low levels in flowers and fruits.

The enzyme catalyses phloretin + UDP-alpha-D-glucose = trilobatin + UDP + H(+). It catalyses the reaction (2S)-naringenin + UDP-alpha-D-glucose = (2S)-naringenin 7-O-beta-D-glucoside + UDP + H(+). Its function is as follows. Glycosyltransferase that possesses phloretin 4'-O-glycosyltransferase activity. Converts phloretin to trilobatin (phloretin 4'-O-glucoside), a potential antioxidant. Can convert with low efficiency phlorizin and trilobatin to their corresponding di-O-glucosides. Can convert with low efficiency naringenin to naringenin-7-O-glucoside. Can convert with low efficiency quercetin to quercetin-7-O-glucoside. This Malus domestica (Apple) protein is Phloretin 4'-O-glucosyltransferase.